Consider the following 267-residue polypeptide: L-aspartate dehydrogenase (267 aa).

Residues Ala-124 and Asn-190 each coordinate NAD(+). The active site involves His-218.

It belongs to the L-aspartate dehydrogenase family.

It carries out the reaction L-aspartate + NADP(+) + H2O = oxaloacetate + NH4(+) + NADPH + H(+). The enzyme catalyses L-aspartate + NAD(+) + H2O = oxaloacetate + NH4(+) + NADH + H(+). Its pathway is cofactor biosynthesis; NAD(+) biosynthesis; iminoaspartate from L-aspartate (dehydrogenase route): step 1/1. In terms of biological role, specifically catalyzes the NAD or NADP-dependent dehydrogenation of L-aspartate to iminoaspartate. The protein is L-aspartate dehydrogenase of Methanococcus maripaludis (strain C7 / ATCC BAA-1331).